The chain runs to 298 residues: MGDTWAQLPWPGPPHSALLLVFFLLAAGVMHSDAGASCPVLCTCRNQVVDCSNQRLFSVPPDLPMDTRNLSLAHNRIAAVPPGYLTCYMELRVLDLRNNSLMELPPGLFLHAKRLAHLDLSYNNLSHVPADMFREAHGLVHIDLSHNPWLRRVHPQAFQGLVHLRDLDLSYGGLAFLSLEALEGLPGLVTLQIGGNPWVCGCTMEPLLKWLRNRIQRCTADSQLAECRGPPEVEGAPLFSLTEESFKACHLTLTLDDYLFIAFVGFVVSIASVATNFLLGITANCCHRWSKANEEEEI.

The first 34 residues, 1 to 34, serve as a signal peptide directing secretion; it reads MGDTWAQLPWPGPPHSALLLVFFLLAAGVMHSDA. The 31-residue stretch at 35–65 folds into the LRRNT domain; sequence GASCPVLCTCRNQVVDCSNQRLFSVPPDLPM. Intrachain disulfides connect cysteine 38–cysteine 44 and cysteine 42–cysteine 51. LRR repeat units lie at residues 66 to 87, 90 to 111, 114 to 135, 138 to 160, and 163 to 186; these read DTRNLSLAHNRIAAVPPGYLTC, ELRVLDLRNNSLMELPPGLFLH, RLAHLDLSYNNLSHVPADMFRE, GLVHIDLSHNPWLRRVHPQAFQG, and HLRDLDLSYGGLAFLSLEALEGLP. An LRRCT domain is found at 196–251; it reads NPWVCGCTMEPLLKWLRNRIQRCTADSQLAECRGPPEVEGAPLFSLTEESFKACHL. Disulfide bonds link cysteine 200–cysteine 227 and cysteine 202–cysteine 249. The helical transmembrane segment at 259–279 threads the bilayer; it reads LFIAFVGFVVSIASVATNFLL.

In terms of assembly, interacts with KCNMA1.

It localises to the cell membrane. Auxiliary protein of the large-conductance, voltage and calcium-activated potassium channel (BK alpha). Modulates gating properties by producing a marked shift in the BK channel's voltage dependence of activation in the hyperpolarizing direction, and in the absence of calcium. The chain is Leucine-rich repeat-containing protein 55 (Lrrc55) from Rattus norvegicus (Rat).